Reading from the N-terminus, the 1450-residue chain is DNA-directed RNA polymerase RPB1 homolog (1450 aa).

The protein belongs to the RNA polymerase beta' chain family. As to quaternary structure, part of the viral DNA-directed RNA polymerase that consists of 8 polII-like subunits (RPB1, RPB2, RPB3, RPB5, RPB6, RPB7, RPB9, RPB10), a capping enzyme and a termination factor.

The protein resides in the virion. It catalyses the reaction RNA(n) + a ribonucleoside 5'-triphosphate = RNA(n+1) + diphosphate. Functionally, catalytic component of the DNA-directed RNA polymerase (RNAP) that catalyzes the transcription in the cytoplasm of viral DNA into RNA using the four ribonucleoside triphosphates as substrates. Forms the polymerase active center together with RPB2. Part of the core element with the central large cleft, the clamp element that moves to open and close the cleft and the jaws that are thought to grab the incoming DNA template. The polypeptide is DNA-directed RNA polymerase RPB1 homolog (Ornithodoros (relapsing fever ticks)).